The following is a 260-amino-acid chain: Thiazole synthase (260 aa).

Lysine 102 serves as the catalytic Schiff-base intermediate with DXP. Residues glycine 163, 189–190 (AG), and 211–212 (NT) each bind 1-deoxy-D-xylulose 5-phosphate.

The protein belongs to the ThiG family. As to quaternary structure, homotetramer. Forms heterodimers with either ThiH or ThiS.

The protein resides in the cytoplasm. It carries out the reaction [ThiS sulfur-carrier protein]-C-terminal-Gly-aminoethanethioate + 2-iminoacetate + 1-deoxy-D-xylulose 5-phosphate = [ThiS sulfur-carrier protein]-C-terminal Gly-Gly + 2-[(2R,5Z)-2-carboxy-4-methylthiazol-5(2H)-ylidene]ethyl phosphate + 2 H2O + H(+). The protein operates within cofactor biosynthesis; thiamine diphosphate biosynthesis. In terms of biological role, catalyzes the rearrangement of 1-deoxy-D-xylulose 5-phosphate (DXP) to produce the thiazole phosphate moiety of thiamine. Sulfur is provided by the thiocarboxylate moiety of the carrier protein ThiS. In vitro, sulfur can be provided by H(2)S. This chain is Thiazole synthase, found in Geotalea uraniireducens (strain Rf4) (Geobacter uraniireducens).